Reading from the N-terminus, the 381-residue chain is Subtilisin amylosacchariticus (381 aa).

An N-terminal signal peptide occupies residues 1–29 (MRSKKLWISLLFALTLIFTMAFSNMSAQA). Residues 30-106 (AGKSSTEKKY…VEEDHIAHEY (77 aa)) constitute a propeptide that is removed on maturation. The 66-residue stretch at 38-103 (KYIVGFKQTM…VAYVEEDHIA (66 aa)) folds into the Inhibitor I9 domain. Q108 provides a ligand contact to Ca(2+). The Peptidase S8 domain maps to 111–380 (PYGISQIKAP…KGLINVQAAA (270 aa)). D138 functions as the Charge relay system in the catalytic mechanism. D147 is a binding site for Ca(2+). Residue H170 is the Charge relay system of the active site. Ca(2+) contacts are provided by L181, N183, I185, V187, A275, Y277, and T280. S327 serves as the catalytic Charge relay system.

This sequence belongs to the peptidase S8 family. Ca(2+) serves as cofactor.

The protein localises to the secreted. The catalysed reaction is Hydrolysis of proteins with broad specificity for peptide bonds, and a preference for a large uncharged residue in P1. Hydrolyzes peptide amides.. In terms of biological role, subtilisin is an extracellular alkaline serine protease, it catalyzes the hydrolysis of proteins and peptide amides. The sequence is that of Subtilisin amylosacchariticus (apr) from Bacillus subtilis subsp. amylosacchariticus.